The sequence spans 248 residues: Phycocyanobilin:ferredoxin oxidoreductase (248 aa).

Belongs to the HY2 family.

It carries out the reaction (2R,3Z)-phycocyanobilin + 4 oxidized [2Fe-2S]-[ferredoxin] = biliverdin IXalpha + 4 reduced [2Fe-2S]-[ferredoxin] + 4 H(+). Its function is as follows. Catalyzes the four-electron reduction of biliverdin IX-alpha (2-electron reduction at both the A and D rings); the reaction proceeds via an isolatable 2-electron intermediate, 181,182-dihydrobiliverdin. The sequence is that of Phycocyanobilin:ferredoxin oxidoreductase from Synechococcus sp. (strain ATCC 27144 / PCC 6301 / SAUG 1402/1) (Anacystis nidulans).